The sequence spans 316 residues: Transaldolase (316 aa).

Lys132 functions as the Schiff-base intermediate with substrate in the catalytic mechanism.

It belongs to the transaldolase family. Type 1 subfamily. As to quaternary structure, homodimer.

The protein localises to the cytoplasm. The enzyme catalyses D-sedoheptulose 7-phosphate + D-glyceraldehyde 3-phosphate = D-erythrose 4-phosphate + beta-D-fructose 6-phosphate. Its pathway is carbohydrate degradation; pentose phosphate pathway; D-glyceraldehyde 3-phosphate and beta-D-fructose 6-phosphate from D-ribose 5-phosphate and D-xylulose 5-phosphate (non-oxidative stage): step 2/3. Transaldolase is important for the balance of metabolites in the pentose-phosphate pathway. In Vibrio parahaemolyticus serotype O3:K6 (strain RIMD 2210633), this protein is Transaldolase.